The following is a 201-amino-acid chain: NADH-quinone oxidoreductase subunit C (201 aa).

Belongs to the complex I 30 kDa subunit family. As to quaternary structure, NDH-1 is composed of 14 different subunits. Subunits NuoB, C, D, E, F, and G constitute the peripheral sector of the complex.

The protein resides in the cell inner membrane. It catalyses the reaction a quinone + NADH + 5 H(+)(in) = a quinol + NAD(+) + 4 H(+)(out). Functionally, NDH-1 shuttles electrons from NADH, via FMN and iron-sulfur (Fe-S) centers, to quinones in the respiratory chain. The immediate electron acceptor for the enzyme in this species is believed to be ubiquinone. Couples the redox reaction to proton translocation (for every two electrons transferred, four hydrogen ions are translocated across the cytoplasmic membrane), and thus conserves the redox energy in a proton gradient. In Dechloromonas aromatica (strain RCB), this protein is NADH-quinone oxidoreductase subunit C.